The following is a 331-amino-acid chain: MLDHGTPIQPVSLPAAELDLGAVGGIAWPEPVQRRLRVGLLNNMPDSALVQTERQFRRLIGPGVELRLFSLDTVPRGPLARAHLDRFYETQGALAGAGLDALVVTGAEPKAERLADEPFFPALAAVVDWADASGVPTLFSCLAAHAAVLHLDGIERRPLPTKHSGIYACTAVAHHPLLAGMPASVPVPHSRWNDLPEQALTARGYRVLRRSEQVGVDLFVRERGASMVFLQGHPEYDGDTLAREYRRDIGRFLDGERDTPPALPENYYVDEAVLRLDAFAAVARAYRSPALHADFPTMAETLPRPAAWQEAAAGLFRNWLALVSDRVALAA.

The Acyl-thioester intermediate role is filled by C141. K162 and S190 together coordinate substrate. H233 acts as the Proton acceptor in catalysis. Residue E235 is part of the active site. R247 provides a ligand contact to substrate.

Belongs to the MetA family.

The protein localises to the cytoplasm. The catalysed reaction is L-homoserine + succinyl-CoA = O-succinyl-L-homoserine + CoA. It functions in the pathway amino-acid biosynthesis; L-methionine biosynthesis via de novo pathway; O-succinyl-L-homoserine from L-homoserine: step 1/1. In terms of biological role, transfers a succinyl group from succinyl-CoA to L-homoserine, forming succinyl-L-homoserine. The protein is Homoserine O-succinyltransferase of Methylorubrum extorquens (strain DSM 6343 / CIP 106787 / DM4) (Methylobacterium extorquens).